We begin with the raw amino-acid sequence, 365 residues long: tRNA-specific 2-thiouridylase MnmA (365 aa).

ATP is bound by residues 9–16 and M35; that span reads GLSGGVDS. The interaction with target base in tRNA stretch occupies residues 95–97; sequence NPD. C100 (nucleophile) is an active-site residue. A disulfide bridge connects residues C100 and C196. G124 is an ATP binding site. An interaction with tRNA region spans residues 146–148; that stretch reads KDQ. C196 (cysteine persulfide intermediate) is an active-site residue. An interaction with tRNA region spans residues 315–316; the sequence is RY.

This sequence belongs to the MnmA/TRMU family.

The protein resides in the cytoplasm. It catalyses the reaction S-sulfanyl-L-cysteinyl-[protein] + uridine(34) in tRNA + AH2 + ATP = 2-thiouridine(34) in tRNA + L-cysteinyl-[protein] + A + AMP + diphosphate + H(+). Catalyzes the 2-thiolation of uridine at the wobble position (U34) of tRNA, leading to the formation of s(2)U34. This is tRNA-specific 2-thiouridylase MnmA from Dechloromonas aromatica (strain RCB).